Here is a 372-residue protein sequence, read N- to C-terminus: Inner membrane protein YbiR (372 aa).

Residues 1–13 (MSLPFLRTLQGDR) lie on the Periplasmic side of the membrane. The next 2 membrane-spanning stretches (helical) occupy residues 14 to 34 (FFQL…FAPK) and 35 to 55 (SWPA…MLLT). Residues 56 to 85 (KGVELSGYFDVLGRKMVRRFATERRLAMFM) lie on the Periplasmic side of the membrane. A helical membrane pass occupies residues 86–106 (VLAAALLSTFLTNDVALFIVV). Topologically, residues 107–122 (PLTITLKRLCEIPVNR) are cytoplasmic. Residues 123 to 143 (LIIFEALAVNAGSLLTPIGNP) traverse the membrane as a helical segment. Residues 144–155 (QNILIWGRSGLS) lie on the Periplasmic side of the membrane. Residues 156-176 (FAGFIAQMAPLAGAMMLTLLL) traverse the membrane as a helical segment. Residues 177-208 (LCWCCFPGKAMQYHTGVQTPEWKPRLVWSCLG) are Cytoplasmic-facing. Residues 209–229 (LYIVFLTALEFKQELWGLVIV) form a helical membrane-spanning segment. Over 230 to 247 (AAGFALLARRVVLSVDWT) the chain is Periplasmic. A helical transmembrane segment spans residues 248 to 268 (LLLVFMAMFIDVHLLTQLPAL). The Cytoplasmic segment spans residues 269-283 (QGVLGNVSHLSEPGL). The helical transmembrane segment at 284–304 (WLTAIGLSQVISNVPSTILLL) threads the bilayer. Residues 305-309 (NYVPP) lie on the Periplasmic side of the membrane. A helical transmembrane segment spans residues 310–330 (SLLLVWAVNVGGFGLLPGSLA). Topologically, residues 331–348 (NLIALRMANDRRIWWRFH) are cytoplasmic. A helical transmembrane segment spans residues 349 to 369 (LYSIPMLLWAALVGYVLLVIL). Residues 370-372 (PAN) are Periplasmic-facing.

The protein belongs to the CitM (TC 2.A.11) transporter family.

It is found in the cell inner membrane. The sequence is that of Inner membrane protein YbiR (ybiR) from Escherichia coli (strain K12).